Reading from the N-terminus, the 106-residue chain is MSNKNKKSGGAGNGAAQKQTRQQSHDSQDYSSFKIVLFYCMLIVFLPVVTFFLLKGFVLDRFFSLSEVKVNIASAVGAVVSLHIALGLYIYRAYFGATGSKAVKED.

Positions 1–26 (MSNKNKKSGGAGNGAAQKQTRQQSHD) are disordered. The Cytoplasmic portion of the chain corresponds to 1–32 (MSNKNKKSGGAGNGAAQKQTRQQSHDSQDYSS). A helical membrane pass occupies residues 33–53 (FKIVLFYCMLIVFLPVVTFFL). Topologically, residues 54 to 69 (LKGFVLDRFFSLSEVK) are lumenal. The chain crosses the membrane as a helical span at residues 70 to 90 (VNIASAVGAVVSLHIALGLYI). The Cytoplasmic segment spans residues 91–106 (YRAYFGATGSKAVKED).

It belongs to the VMA21 family.

It is found in the endoplasmic reticulum membrane. The protein resides in the endoplasmic reticulum-Golgi intermediate compartment membrane. The protein localises to the cytoplasmic vesicle. It localises to the COPII-coated vesicle membrane. Its function is as follows. Required for the assembly of the V0 complex of the vacuolar ATPase (V-ATPase) in the endoplasmic reticulum. This chain is Vacuolar ATPase assembly integral membrane protein VMA21 homolog, found in Drosophila ananassae (Fruit fly).